A 211-amino-acid polypeptide reads, in one-letter code: Protein-methionine-sulfoxide reductase heme-binding subunit MsrQ (211 aa).

A run of 4 helical transmembrane segments spans residues 10-30 (WLKV…VWAI), 82-102 (LWCF…ELGV), 116-136 (PYLT…FTST), and 153-173 (FVYL…KIIS).

Belongs to the MsrQ family. Heterodimer of a catalytic subunit (MsrP) and a heme-binding subunit (MsrQ). Requires FMN as cofactor. Heme b is required as a cofactor.

Its subcellular location is the cell inner membrane. Functionally, part of the MsrPQ system that repairs oxidized periplasmic proteins containing methionine sulfoxide residues (Met-O), using respiratory chain electrons. Thus protects these proteins from oxidative-stress damage caused by reactive species of oxygen and chlorine generated by the host defense mechanisms. MsrPQ is essential for the maintenance of envelope integrity under bleach stress, rescuing a wide series of structurally unrelated periplasmic proteins from methionine oxidation, including the primary periplasmic chaperone SurA and the lipoprotein Pal. MsrQ provides electrons for reduction to the reductase catalytic subunit MsrP, using the quinone pool of the respiratory chain. This Shigella dysenteriae serotype 1 (strain Sd197) protein is Protein-methionine-sulfoxide reductase heme-binding subunit MsrQ.